Consider the following 216-residue polypeptide: MDFPRFLLSAYLLLLSFAQCQHYYLLRPIPSDTLPLLELKEDPDPIYDPREKDLNETELRSALGDFDSRFLSVGPPQDRYAGNEDLDEQELQLNLAGMMPKDIKNLDFDAPWGKKRKASKKLKRRLQMWLWSYSFCPVLYAWNDLGSRFWPRFVRAGSCYTKRSCSVPEGMVCKPAKSTHITLLRWRCVARRGALKCAWIPVQYPIITECKCSCAN.

The first 18 residues, 1 to 18 (MDFPRFLLSAYLLLLSFA), serve as a signal peptide directing secretion. Residue Asn-55 is glycosylated (N-linked (GlcNAc...) asparagine).

Belongs to the noggin family. Homodimer; disulfide-linked.

The protein resides in the secreted. Functionally, inhibitor of bone morphogenetic proteins (BMP) signaling. May play an important role in the dorsoventral patterning of the embryo. In Danio rerio (Zebrafish), this protein is Noggin-1 (nog1).